The sequence spans 248 residues: Pyridoxine 5'-phosphate synthase (248 aa).

Residue Asn-12 coordinates 3-amino-2-oxopropyl phosphate. 14 to 15 (DH) is a 1-deoxy-D-xylulose 5-phosphate binding site. Arg-23 contacts 3-amino-2-oxopropyl phosphate. His-48 serves as the catalytic Proton acceptor. Residues Arg-50 and His-55 each coordinate 1-deoxy-D-xylulose 5-phosphate. Residue Glu-75 is the Proton acceptor of the active site. Thr-105 is a 1-deoxy-D-xylulose 5-phosphate binding site. Catalysis depends on His-199, which acts as the Proton donor. 3-amino-2-oxopropyl phosphate is bound by residues Gly-200 and 221–222 (GH).

This sequence belongs to the PNP synthase family. As to quaternary structure, homooctamer; tetramer of dimers.

The protein localises to the cytoplasm. The enzyme catalyses 3-amino-2-oxopropyl phosphate + 1-deoxy-D-xylulose 5-phosphate = pyridoxine 5'-phosphate + phosphate + 2 H2O + H(+). Its pathway is cofactor biosynthesis; pyridoxine 5'-phosphate biosynthesis; pyridoxine 5'-phosphate from D-erythrose 4-phosphate: step 5/5. In terms of biological role, catalyzes the complicated ring closure reaction between the two acyclic compounds 1-deoxy-D-xylulose-5-phosphate (DXP) and 3-amino-2-oxopropyl phosphate (1-amino-acetone-3-phosphate or AAP) to form pyridoxine 5'-phosphate (PNP) and inorganic phosphate. The chain is Pyridoxine 5'-phosphate synthase from Jannaschia sp. (strain CCS1).